The chain runs to 447 residues: Chromosomal replication initiator protein DnaA (447 aa).

Residues 1–74 (MENIEELWSA…MLLEVTGSEL (74 aa)) form a domain I, interacts with DnaA modulators region. The segment at 74–108 (LNTKFIIPDSLEEIEEQKPMPKPKQSTDTGDSPKS) is domain II. A disordered region spans residues 85–107 (EEIEEQKPMPKPKQSTDTGDSPK). Positions 97-107 (KQSTDTGDSPK) are enriched in polar residues. The segment at 109–325 (MLNSKYTFDT…GALIRVVAYS (217 aa)) is domain III, AAA+ region. 4 residues coordinate ATP: G153, G155, K156, and T157. The tract at residues 326–447 (SLVNQDIDAS…EELKEKLKSI (122 aa)) is domain IV, binds dsDNA.

This sequence belongs to the DnaA family. As to quaternary structure, oligomerizes as a right-handed, spiral filament on DNA at oriC.

The protein localises to the cytoplasm. Its function is as follows. Plays an essential role in the initiation and regulation of chromosomal replication. ATP-DnaA binds to the origin of replication (oriC) to initiate formation of the DNA replication initiation complex once per cell cycle. Binds the DnaA box (a 9 base pair repeat at the origin) and separates the double-stranded (ds)DNA. Forms a right-handed helical filament on oriC DNA; dsDNA binds to the exterior of the filament while single-stranded (ss)DNA is stabiized in the filament's interior. The ATP-DnaA-oriC complex binds and stabilizes one strand of the AT-rich DNA unwinding element (DUE), permitting loading of DNA polymerase. After initiation quickly degrades to an ADP-DnaA complex that is not apt for DNA replication. Binds acidic phospholipids. The sequence is that of Chromosomal replication initiator protein DnaA from Oceanobacillus iheyensis (strain DSM 14371 / CIP 107618 / JCM 11309 / KCTC 3954 / HTE831).